We begin with the raw amino-acid sequence, 88 residues long: LYR motif-containing protein 2 (88 aa).

The N-terminal 19 residues, 1 to 19, are a transit peptide targeting the mitochondrion; it reads MATSRLPPATLTLKQFMRR.

Belongs to the complex I LYR family.

Its subcellular location is the mitochondrion. Its function is as follows. Involved in efficient integration of the N-module into mitochondrial respiratory chain complex I. The polypeptide is LYR motif-containing protein 2 (LYRM2) (Bos taurus (Bovine)).